The primary structure comprises 330 residues: G-protein coupled receptor 74 (330 aa).

7 consecutive transmembrane segments (helical) span residues 50 to 70 (LIVV…NLWL), 85 to 105 (FILI…IFSI), 121 to 141 (MVVF…LCFD), 160 to 180 (WVFC…QKAL), 210 to 230 (VAVS…CIFY), 252 to 272 (MLLF…LSFI), and 295 to 315 (LPLL…IYIL). Cysteines 117 and 195 form a disulfide.

The protein belongs to the G-protein coupled receptor 1 family.

The protein localises to the host membrane. The sequence is that of G-protein coupled receptor 74 (74) from Equus caballus (Horse).